Here is a 390-residue protein sequence, read N- to C-terminus: COP9/Signalosome and eIF3 complex-shared subunit 1 (390 aa).

Residues 188–351 (QAAKVMTALL…RTLIVSSYQH (164 aa)) form the PCI domain.

Belongs to the eIF-3 subunit M family. In terms of assembly, component of the eukaryotic translation initiation factor 3 (eIF-3) complex. Within the eIF-3 complex, interacts directly with eif-3.F. Component of the CSN complex, composed of csn-1, csn-2, csn-3, csn-4, csn-5, csn-6 and csn-7. Within the CSN complex, interacts directly with csn-1 and csn-4.

It is found in the cytoplasm. Its function is as follows. Component of the eukaryotic translation initiation factor 3 (eIF-3) complex, which is involved in protein synthesis of a specialized repertoire of mRNAs and, together with other initiation factors, stimulates binding of mRNA and methionyl-tRNAi to the 40S ribosome. The eIF-3 complex specifically targets and initiates translation of a subset of mRNAs involved in cell proliferation (Potential). Component of the COP9 signalosome complex (CSN), a complex involved in various cellular and developmental processes. The CSN complex is an essential regulator of the ubiquitin (Ubl) conjugation pathway by mediating the deneddylation of the cullin subunits of the SCF-type E3 ligase complexes, leading to decrease the Ubl ligase activity of SCF. The CSN complex plays an essential role in embryogenesis and oogenesis and is required to regulate microtubule stability in the early embryo. Mediates mei-1 targeting for degradation at the meiosis to mitosis transition via deneddylation of cul-3. In Caenorhabditis elegans, this protein is COP9/Signalosome and eIF3 complex-shared subunit 1.